We begin with the raw amino-acid sequence, 782 residues long: Spastin (782 aa).

The segment at 1 to 103 (MVRTKNQSSS…GNAPRGGNSS (103 aa)) is disordered. Topologically, residues 1–115 (MVRTKNQSSS…KQNLYVVSFP (115 aa)) are cytoplasmic. Positions 1 to 212 (MVRTKNQSSS…RAIQPLEMAG (212 aa)) are required for localization to punctate cytoplasmic foci. Residues 8–19 (SSSSSASSSTKS) are compositionally biased toward low complexity. Residues 25–34 (GGTTNRSRSC) are compositionally biased toward polar residues. Composition is skewed to low complexity over residues 44-75 (SKSSSKPTSNNRQRTTTNNNTTAITTTPGSSP) and 84-93 (TTDADLTPTS). Residues 116–136 (IIFLFNVLRSLIYQLFCIFRY) constitute an intramembrane region (helical). Topologically, residues 137–782 (LYGASTKVIY…WSQDYGDITI (646 aa)) are cytoplasmic. The sufficient for interaction with microtubules and microtubule severing stretch occupies residues 210-782 (MAGNRAGGNY…WSQDYGDITI (573 aa)). The MIT domain occupies 235–310 (HRRAFEYISK…SMARDRLHFL (76 aa)). The segment at 325–479 (KEQQQKKKSP…GSGSGASTPM (155 aa)) is disordered. A compositionally biased stretch (low complexity) spans 334–343 (PQQQPQQQQQ). Polar residues-rich tracts occupy residues 408–426 (NKSQTLPRNLGSKTSSTSV) and 447–463 (QFSSGRNTPPQRSRTPI). Residues 465–479 (NNAAGGSGSGASTPM) are required for interaction with microtubules. 547–554 (GPPGNGKT) provides a ligand contact to ATP.

This sequence belongs to the AAA ATPase family. Spastin subfamily. Homohexamer. The homohexamer is stabilized by ATP-binding. The homohexamer may adopt a ring conformation through which microtubules pass prior to being severed. Interacts with microtubules. Interacts with atl; may be involved in microtubule dynamics.

Its subcellular location is the membrane. It localises to the cytoplasm. It is found in the cytoskeleton. The protein localises to the microtubule organizing center. The protein resides in the centrosome. Its subcellular location is the chromosome. It localises to the lipid droplet. The catalysed reaction is n ATP + n H2O + a microtubule = n ADP + n phosphate + (n+1) alpha/beta tubulin heterodimers.. Functionally, ATP-dependent microtubule severing protein. Stimulates microtubule minus-end depolymerization and poleward microtubule flux in the mitotic spindle. Regulates microtubule stability in the neuromuscular junction synapse. Involved in lipid metabolism by regulating the size and distribution of lipid droplets. Involved in axon regeneration by regulating microtubule severing. The chain is Spastin from Drosophila grimshawi (Hawaiian fruit fly).